Here is a 335-residue protein sequence, read N- to C-terminus: Methionine import ATP-binding protein MetN 1 (335 aa).

Residues 2–242 (IEFQNVHKTY…PKHPTTKRFV (241 aa)) enclose the ABC transporter domain. Residue 38 to 45 (GHSGAGKS) participates in ATP binding.

This sequence belongs to the ABC transporter superfamily. Methionine importer (TC 3.A.1.24) family. The complex is composed of two ATP-binding proteins (MetN), two transmembrane proteins (MetI) and a solute-binding protein (MetQ).

Its subcellular location is the cell inner membrane. It carries out the reaction L-methionine(out) + ATP + H2O = L-methionine(in) + ADP + phosphate + H(+). It catalyses the reaction D-methionine(out) + ATP + H2O = D-methionine(in) + ADP + phosphate + H(+). Its function is as follows. Part of the ABC transporter complex MetNIQ involved in methionine import. Responsible for energy coupling to the transport system. The chain is Methionine import ATP-binding protein MetN 1 from Pseudomonas fluorescens (strain Pf0-1).